A 458-amino-acid polypeptide reads, in one-letter code: Vacuolar basic amino acid transporter 3 (458 aa).

Residues 1–9 (MNMLIVGRV) are Cytoplasmic-facing. Residues 10 to 30 (VASVGGSGLQTLCFVIGCTMV) form a helical membrane-spanning segment. Residues 31 to 36 (GERSRP) are Vacuolar-facing. The chain crosses the membrane as a helical span at residues 37–57 (LVISILSCAFAVAAIVGPIIG). At 58–67 (GAFTTHVTWR) the chain is on the cytoplasmic side. A helical membrane pass occupies residues 68 to 88 (WCFYINLPIGGLAIIMFLLTY). The Vacuolar portion of the chain corresponds to 89-132 (KAENKGILQQIKDAIGTISSFTFSKFRHQVNFKRLMNGIIFKFD). A helical transmembrane segment spans residues 133–153 (FFGFALCSAGLVLFLLGLTFG). Residues 154–163 (GNKYSWNSGQ) are Cytoplasmic-facing. A helical transmembrane segment spans residues 164–184 (VIAYLVLGVLLFIFSLVYDFF). Over 185–205 (LFDKFNPEPDNISYRPLLLRR) the chain is Vacuolar. N-linked (GlcNAc...) asparagine glycosylation is present at Asn-195. Residues 206–226 (LVAKPAIIIINMVTFLLCTGY) form a helical membrane-spanning segment. The Cytoplasmic segment spans residues 227–248 (NGQMIYSVQFFQLIFASSAWKA). Residues 249–269 (GLHLIPIVITNVIAAIASGVI) form a helical membrane-spanning segment. The Vacuolar segment spans residues 270 to 277 (TKKLGLVK). Residues 278-298 (PLLIFGGVLGVIGAGLMTLMT) traverse the membrane as a helical segment. Over 299–306 (NTSTKSTQ) the chain is Cytoplasmic. Residues 307–327 (IGVLLLPGFSLGFALQASLMS) form a helical membrane-spanning segment. Residues 328–415 (AQLQITKDRP…STIGNILSDS (88 aa)) lie on the Vacuolar side of the membrane. Residues 416 to 436 (IKNVFWMDLGFYALGFLFCSF) traverse the membrane as a helical segment. Residues 437–458 (SSNKKLIIPKKDETPEDNLEDK) lie on the Cytoplasmic side of the membrane.

This sequence belongs to the major facilitator superfamily.

Its subcellular location is the vacuole membrane. Its function is as follows. Transporter required for vacuolar uptake of histidine and lysine. The polypeptide is Vacuolar basic amino acid transporter 3 (VBA3) (Saccharomyces cerevisiae (strain ATCC 204508 / S288c) (Baker's yeast)).